An 811-amino-acid chain; its full sequence is DEAD-box ATP-dependent RNA helicase 48 (811 aa).

Disordered stretches follow at residues 1–32 and 93–138; these read MGGG…ERGL and DDGP…EPRL. Over residues 15–29 the composition is skewed to basic residues; that stretch reads WQHKRMHEKLARHKE. Basic and acidic residues-rich tracts occupy residues 95–104 and 117–138; these read GPIHRADRPR and GDRR…EPRL. Positions 286–333 form a coiled coil; sequence RNCDMKKERRALKSYEEENNDLAGSFRELREEIKNREVLGAERRRYES. The Q motif motif lies at 342–370; sequence KRFEECGISPLTVKALTDAGYVQTTVVQE. A Helicase ATP-binding domain is found at 373–556; it reads LPMCLEGKDV…QLVLKRDHVF (184 aa). Residue 386-393 coordinates ATP; sequence AKTGTGKS. A DEAD box motif is present at residues 504 to 507; the sequence is DEAD. Residues 570–740 enclose the Helicase C-terminal domain; that stretch reads KVEQLYLVMP…EMKRKVDGSI (171 aa).

This sequence belongs to the DEAD box helicase family.

The enzyme catalyses ATP + H2O = ADP + phosphate + H(+). This chain is DEAD-box ATP-dependent RNA helicase 48, found in Oryza sativa subsp. japonica (Rice).